We begin with the raw amino-acid sequence, 87 residues long: Large ribosomal subunit protein bL27 (87 aa).

A disordered region spans residues 1 to 25; the sequence is MAHKKGASSSRNGRDSNAQRLGVKR. The span at 7-19 shows a compositional bias: polar residues; it reads ASSSRNGRDSNAQ.

It belongs to the bacterial ribosomal protein bL27 family.

The protein is Large ribosomal subunit protein bL27 of Rhodococcus jostii (strain RHA1).